Consider the following 89-residue polypeptide: Small ribosomal subunit protein uS15 (89 aa).

It belongs to the universal ribosomal protein uS15 family. In terms of assembly, part of the 30S ribosomal subunit. Forms a bridge to the 50S subunit in the 70S ribosome, contacting the 23S rRNA.

Functionally, one of the primary rRNA binding proteins, it binds directly to 16S rRNA where it helps nucleate assembly of the platform of the 30S subunit by binding and bridging several RNA helices of the 16S rRNA. Forms an intersubunit bridge (bridge B4) with the 23S rRNA of the 50S subunit in the ribosome. The protein is Small ribosomal subunit protein uS15 of Rhizorhabdus wittichii (strain DSM 6014 / CCUG 31198 / JCM 15750 / NBRC 105917 / EY 4224 / RW1) (Sphingomonas wittichii).